The following is an 81-amino-acid chain: MASREEIFSKVKSIISEKLGVDESQVTEEAKLIDDLGADSLDLVDLVMDFESEFGVKVDDADLEKISTVGDIVSYIEKKLG.

The region spanning 5–80 (EEIFSKVKSI…DIVSYIEKKL (76 aa)) is the Carrier domain. Residue Ser-40 is modified to O-(pantetheine 4'-phosphoryl)serine.

This sequence belongs to the acyl carrier protein (ACP) family. Post-translationally, 4'-phosphopantetheine is transferred from CoA to a specific serine of apo-ACP by AcpS. This modification is essential for activity because fatty acids are bound in thioester linkage to the sulfhydryl of the prosthetic group.

The protein resides in the cytoplasm. The protein operates within lipid metabolism; fatty acid biosynthesis. In terms of biological role, carrier of the growing fatty acid chain in fatty acid biosynthesis. In Thermotoga maritima (strain ATCC 43589 / DSM 3109 / JCM 10099 / NBRC 100826 / MSB8), this protein is Acyl carrier protein.